A 268-amino-acid chain; its full sequence is Probable 6-phosphogluconolactonase 1 (268 aa).

The protein belongs to the glucosamine/galactosamine-6-phosphate isomerase family. 6-phosphogluconolactonase subfamily.

The protein localises to the cytoplasm. Its subcellular location is the cytosol. It catalyses the reaction 6-phospho-D-glucono-1,5-lactone + H2O = 6-phospho-D-gluconate + H(+). Its pathway is carbohydrate degradation; pentose phosphate pathway; D-ribulose 5-phosphate from D-glucose 6-phosphate (oxidative stage): step 2/3. In terms of biological role, catalyzes the hydrolysis of 6-phosphogluconolactone to 6-phosphogluconate. The protein is Probable 6-phosphogluconolactonase 1 of Arabidopsis thaliana (Mouse-ear cress).